The chain runs to 485 residues: Adenosylhomocysteinase (485 aa).

Substrate contacts are provided by Thr64, Asp139, and Glu205. 206-208 (TTT) serves as a coordination point for NAD(+). Residues Lys235 and Asp239 each contribute to the substrate site. NAD(+) contacts are provided by residues Asn240, 269–274 (GYGDVG), Glu292, Asn327, 348–350 (IGH), and Asn397.

Belongs to the adenosylhomocysteinase family. Homotetramer. NAD(+) serves as cofactor.

The catalysed reaction is S-adenosyl-L-homocysteine + H2O = L-homocysteine + adenosine. It participates in amino-acid biosynthesis; L-homocysteine biosynthesis; L-homocysteine from S-adenosyl-L-homocysteine: step 1/1. Adenosylhomocysteine is a competitive inhibitor of S-adenosyl-L-methionine-dependent methyl transferase reactions; therefore adenosylhomocysteinase may play a key role in the control of methylations via regulation of the intracellular concentration of adenosylhomocysteine. In Catharanthus roseus (Madagascar periwinkle), this protein is Adenosylhomocysteinase (SAHH).